The primary structure comprises 169 residues: UPF0303 protein BMEI0598 (169 aa).

Belongs to the UPF0303 family.

The sequence is that of UPF0303 protein BMEI0598 from Brucella melitensis biotype 1 (strain ATCC 23456 / CCUG 17765 / NCTC 10094 / 16M).